The primary structure comprises 472 residues: Serine/threonine-protein kinase sax-1 (472 aa).

In terms of domain architecture, Protein kinase spans 87 to 381; it reads FESLKVIGRG…LDEIKQCPFF (295 aa). Residues 93–101 and Lys-116 each bind ATP; that span reads IGRGAFGEV. Asp-210 functions as the Proton acceptor in the catalytic mechanism. Positions 382–452 constitute an AGC-kinase C-terminal domain; sequence RRIDWNHIRE…KRFDGLTQKM (71 aa).

This sequence belongs to the protein kinase superfamily. AGC Ser/Thr protein kinase family. The cofactor is Mg(2+).

It localises to the cytoplasm. Its subcellular location is the nucleus. The catalysed reaction is L-seryl-[protein] + ATP = O-phospho-L-seryl-[protein] + ADP + H(+). It catalyses the reaction L-threonyl-[protein] + ATP = O-phospho-L-threonyl-[protein] + ADP + H(+). Its function is as follows. Acts with sax-2 to restrict the growth of both primary and secondary neurites. Regulates mechanosensory tiling by controlling the termination point of sensory dendrites. This is Serine/threonine-protein kinase sax-1 from Caenorhabditis briggsae.